A 229-amino-acid polypeptide reads, in one-letter code: NAD(P)H-hydrate epimerase (229 aa).

In terms of domain architecture, YjeF N-terminal spans 9-216; sequence AISVDEELFN…KLEEKYAMNL (208 aa). 59–63 contributes to the (6S)-NADPHX binding site; it reads NNGGD. The K(+) site is built by Asn-60 and Asp-124. (6S)-NADPHX-binding positions include 128–134 and Asp-157; that span reads GFSFKPP. Ser-160 contacts K(+).

It belongs to the NnrE/AIBP family. Requires K(+) as cofactor.

The enzyme catalyses (6R)-NADHX = (6S)-NADHX. The catalysed reaction is (6R)-NADPHX = (6S)-NADPHX. Its function is as follows. Catalyzes the epimerization of the S- and R-forms of NAD(P)HX, a damaged form of NAD(P)H that is a result of enzymatic or heat-dependent hydration. This is a prerequisite for the S-specific NAD(P)H-hydrate dehydratase to allow the repair of both epimers of NAD(P)HX. The protein is NAD(P)H-hydrate epimerase of Anopheles gambiae (African malaria mosquito).